A 277-amino-acid chain; its full sequence is Phosphatidylglycerol--prolipoprotein diacylglyceryl transferase (277 aa).

A run of 4 helical transmembrane segments spans residues 11–31, 55–75, 93–113, and 117–137; these read IIFS…LISF, LLYI…IIFY, GGMS…YLSL, and VKIL…LGAG. Arginine 138 contacts a 1,2-diacyl-sn-glycero-3-phospho-(1'-sn-glycerol). The next 3 helical transmembrane spans lie at 192–212, 220–240, and 256–276; these read PSQL…IYFF, GSIS…SEFF, and MGQI…NLFI.

This sequence belongs to the Lgt family.

It localises to the cell inner membrane. The catalysed reaction is L-cysteinyl-[prolipoprotein] + a 1,2-diacyl-sn-glycero-3-phospho-(1'-sn-glycerol) = an S-1,2-diacyl-sn-glyceryl-L-cysteinyl-[prolipoprotein] + sn-glycerol 1-phosphate + H(+). The protein operates within protein modification; lipoprotein biosynthesis (diacylglyceryl transfer). Its function is as follows. Catalyzes the transfer of the diacylglyceryl group from phosphatidylglycerol to the sulfhydryl group of the N-terminal cysteine of a prolipoprotein, the first step in the formation of mature lipoproteins. This Buchnera aphidicola subsp. Schizaphis graminum (strain Sg) protein is Phosphatidylglycerol--prolipoprotein diacylglyceryl transferase.